Consider the following 192-residue polypeptide: Large ribosomal subunit protein bL9 (192 aa).

Residues 172–192 (DALRPEDFFDPEADGVDEDEA) are disordered. Positions 179-192 (FFDPEADGVDEDEA) are enriched in acidic residues.

The protein belongs to the bacterial ribosomal protein bL9 family.

Its function is as follows. Binds to the 23S rRNA. This Rhizobium leguminosarum bv. trifolii (strain WSM2304) protein is Large ribosomal subunit protein bL9.